The sequence spans 484 residues: Glutamyl-tRNA(Gln) amidotransferase subunit A (484 aa).

Catalysis depends on charge relay system residues Lys76 and Ser151. Catalysis depends on Ser175, which acts as the Acyl-ester intermediate.

This sequence belongs to the amidase family. GatA subfamily. Heterotrimer of A, B and C subunits.

It carries out the reaction L-glutamyl-tRNA(Gln) + L-glutamine + ATP + H2O = L-glutaminyl-tRNA(Gln) + L-glutamate + ADP + phosphate + H(+). Its function is as follows. Allows the formation of correctly charged Gln-tRNA(Gln) through the transamidation of misacylated Glu-tRNA(Gln) in organisms which lack glutaminyl-tRNA synthetase. The reaction takes place in the presence of glutamine and ATP through an activated gamma-phospho-Glu-tRNA(Gln). This Saccharophagus degradans (strain 2-40 / ATCC 43961 / DSM 17024) protein is Glutamyl-tRNA(Gln) amidotransferase subunit A.